Consider the following 581-residue polypeptide: Pentatricopeptide repeat-containing protein At3g56550 (581 aa).

PPR repeat units lie at residues 70 to 104 (STSD…SVSR), 106 to 140 (DLFT…GFLD), 141 to 171 (DAIV…MPVR), 172 to 206 (DLVS…GVCG), 207 to 241 (DSYT…RCES), 242 to 272 (CVFV…MRKR), 273 to 307 (DVLT…GVRP), 308 to 338 (NAIT…MSSQ), and 344 to 378 (NVKH…EDPV). The interval 379–454 (LWRTLLGSCK…VPGWSWIEIG (76 aa)) is type E motif. Residues 455–485 (DQVHKFVVDDKMHPESAVIYSELGEVINRAI) form a type E(+) motif region. The segment at 486 to 581 (LAGYKPEDSN…DGICSCNDYW (96 aa)) is type DYW motif.

Belongs to the PPR family. PCMP-H subfamily.

This chain is Pentatricopeptide repeat-containing protein At3g56550 (PCMP-H80), found in Arabidopsis thaliana (Mouse-ear cress).